Consider the following 151-residue polypeptide: S-protein homolog 27 (151 aa).

N-linked (GlcNAc...) asparagine glycosylation is found at N91 and N123.

It belongs to the plant self-incompatibility (S1) protein family.

The protein resides in the secreted. The protein is S-protein homolog 27 of Arabidopsis thaliana (Mouse-ear cress).